We begin with the raw amino-acid sequence, 56 residues long: Small ribosomal subunit protein uS14z/uS14y/uS14x (56 aa).

4 residues coordinate Zn(2+): Cys-21, Cys-24, Cys-39, and Cys-42.

This sequence belongs to the universal ribosomal protein uS14 family. It depends on Zn(2+) as a cofactor.

In Arabidopsis thaliana (Mouse-ear cress), this protein is Small ribosomal subunit protein uS14z/uS14y/uS14x (RPS29A).